The following is a 353-amino-acid chain: DNA replication and repair protein RecF (353 aa).

30 to 37 (GANGQGKT) is a binding site for ATP.

Belongs to the RecF family.

It localises to the cytoplasm. Its function is as follows. The RecF protein is involved in DNA metabolism; it is required for DNA replication and normal SOS inducibility. RecF binds preferentially to single-stranded, linear DNA. It also seems to bind ATP. The polypeptide is DNA replication and repair protein RecF (Carboxydothermus hydrogenoformans (strain ATCC BAA-161 / DSM 6008 / Z-2901)).